The primary structure comprises 294 residues: Nucleotide-binding protein Smlt1108 (294 aa).

16–23 provides a ligand contact to ATP; the sequence is GLSGSGKS. 69–72 contributes to the GTP binding site; the sequence is DVRG.

This sequence belongs to the RapZ-like family.

Functionally, displays ATPase and GTPase activities. The polypeptide is Nucleotide-binding protein Smlt1108 (Stenotrophomonas maltophilia (strain K279a)).